We begin with the raw amino-acid sequence, 109 residues long: Staphostatin B (109 aa).

The binds to staphopain B stretch occupies residues 97-101 (IGTSR).

This sequence belongs to the protease inhibitor I57 (SspC) family. As to quaternary structure, forms a stable non-covalent complex with prematurely activated/folded SspB.

The protein localises to the cytoplasm. In terms of biological role, specifically inhibits the cysteine protease staphopain B (SspB) by blocking the active site of the enzyme. Probably required to protect cytoplasmic proteins from being degraded by prematurely activated/folded prostaphopain B. Also involved in growth capacity, viability and bacterial morphology. This chain is Staphostatin B (sspC), found in Staphylococcus aureus (strain NCTC 8325 / PS 47).